The primary structure comprises 584 residues: Proteasome-associated ATPase (584 aa).

The stretch at 8–90 (RHAERDRDEL…KEEVDRLSQP (83 aa)) forms a coiled coil. 272–277 (GCGKTL) is a binding site for ATP. The tract at residues 583-584 (YL) is docks into pockets in the proteasome alpha-ring.

It belongs to the AAA ATPase family. Homohexamer. Assembles into a hexameric ring structure that caps the 20S proteasome core. Strongly interacts with the prokaryotic ubiquitin-like protein Pup through a hydrophobic interface; the interacting region of ARC lies in its N-terminal coiled-coil domain. There is one Pup binding site per ARC hexamer ring. Upon ATP-binding, the C-terminus of ARC interacts with the alpha-rings of the proteasome core, possibly by binding to the intersubunit pockets.

Its pathway is protein degradation; proteasomal Pup-dependent pathway. In terms of biological role, ATPase which is responsible for recognizing, binding, unfolding and translocation of pupylated proteins into the bacterial 20S proteasome core particle. May be essential for opening the gate of the 20S proteasome via an interaction with its C-terminus, thereby allowing substrate entry and access to the site of proteolysis. Thus, the C-termini of the proteasomal ATPase may function like a 'key in a lock' to induce gate opening and therefore regulate proteolysis. The polypeptide is Proteasome-associated ATPase (Thermobifida fusca (strain YX)).